A 218-amino-acid chain; its full sequence is Cytochrome c biogenesis ATP-binding export protein CcmA (218 aa).

The ABC transporter domain maps to 12–217; it reads LHAEQLSSIR…KLSLEYRGEV (206 aa). 44 to 51 serves as a coordination point for ATP; that stretch reads GPNGAGKS.

It belongs to the ABC transporter superfamily. CcmA exporter (TC 3.A.1.107) family. As to quaternary structure, the complex is composed of two ATP-binding proteins (CcmA) and two transmembrane proteins (CcmB).

It is found in the cell inner membrane. The catalysed reaction is heme b(in) + ATP + H2O = heme b(out) + ADP + phosphate + H(+). Part of the ABC transporter complex CcmAB involved in the biogenesis of c-type cytochromes; once thought to export heme, this seems not to be the case, but its exact role is uncertain. Responsible for energy coupling to the transport system. This Idiomarina loihiensis (strain ATCC BAA-735 / DSM 15497 / L2-TR) protein is Cytochrome c biogenesis ATP-binding export protein CcmA.